A 167-amino-acid chain; its full sequence is NAD(P)H-quinone oxidoreductase subunit I, chloroplastic (167 aa).

2 consecutive 4Fe-4S ferredoxin-type domains span residues 55–84 and 95–124; these read GRIH…VDWK and LNYS…MTEE. Residues Cys64, Cys67, Cys70, Cys74, Cys104, Cys107, Cys110, and Cys114 each contribute to the [4Fe-4S] cluster site.

The protein belongs to the complex I 23 kDa subunit family. In terms of assembly, NDH is composed of at least 16 different subunits, 5 of which are encoded in the nucleus. It depends on [4Fe-4S] cluster as a cofactor.

The protein localises to the plastid. Its subcellular location is the chloroplast thylakoid membrane. The enzyme catalyses a plastoquinone + NADH + (n+1) H(+)(in) = a plastoquinol + NAD(+) + n H(+)(out). It catalyses the reaction a plastoquinone + NADPH + (n+1) H(+)(in) = a plastoquinol + NADP(+) + n H(+)(out). Functionally, NDH shuttles electrons from NAD(P)H:plastoquinone, via FMN and iron-sulfur (Fe-S) centers, to quinones in the photosynthetic chain and possibly in a chloroplast respiratory chain. The immediate electron acceptor for the enzyme in this species is believed to be plastoquinone. Couples the redox reaction to proton translocation, and thus conserves the redox energy in a proton gradient. The protein is NAD(P)H-quinone oxidoreductase subunit I, chloroplastic of Aethionema cordifolium (Lebanon stonecress).